The primary structure comprises 171 residues: Secreted LysM effector Blys4 (171 aa).

Positions 125 to 169 (KPYTIHQGDTCWDIAESHSVGVDDILTLNPELDCDKLSIGSQICL) constitute a LysM domain.

Belongs to the secreted LysM effector family.

In terms of biological role, might have a role in sequestration of chitin oligosaccharides (breakdown products of fungal cell walls that are released during invasion and act as triggers of host immunity) to dampen host defense. The protein is Secreted LysM effector Blys4 of Beauveria bassiana (strain ARSEF 2860) (White muscardine disease fungus).